Reading from the N-terminus, the 630-residue chain is YTH domain-containing family protein 1 (630 aa).

Disordered stretches follow at residues 38-113 (DMTQ…YMQQ), 160-183 (YYPQGAQFPNHGPMPQNSMLAGPY), and 200-241 (QVGD…QSGH). Positions 70–102 (PGQQQQHQYGSPPNTNGNAQPMPQAHGNNTMNS) are enriched in polar residues. The YTH domain occupies 382 to 590 (EKYFILKSLT…SVGRKLTGLF (209 aa)).

The protein belongs to the YTHDF family. YTHDF1 subfamily.

It localises to the cytoplasm. Its subcellular location is the P-body. In terms of biological role, specifically recognizes and binds N6-methyladenosine (m6A)-containing mRNAs, and regulates their stability. M6A is a modification present at internal sites of mRNAs and some non-coding RNAs and plays a role in mRNA stability and processing. Plays a role in pathogenicity towards plant host. The protein is YTH domain-containing family protein 1 of Pyricularia oryzae (strain 70-15 / ATCC MYA-4617 / FGSC 8958) (Rice blast fungus).